Consider the following 229-residue polypeptide: Putative N-acetylmannosamine-6-phosphate 2-epimerase (229 aa).

The protein belongs to the NanE family.

The enzyme catalyses an N-acyl-D-glucosamine 6-phosphate = an N-acyl-D-mannosamine 6-phosphate. The protein operates within amino-sugar metabolism; N-acetylneuraminate degradation; D-fructose 6-phosphate from N-acetylneuraminate: step 3/5. In terms of biological role, converts N-acetylmannosamine-6-phosphate (ManNAc-6-P) to N-acetylglucosamine-6-phosphate (GlcNAc-6-P). The protein is Putative N-acetylmannosamine-6-phosphate 2-epimerase of Escherichia coli O8 (strain IAI1).